A 1130-amino-acid polypeptide reads, in one-letter code: Serine/threonine-protein kinase LATS1 (1130 aa).

Positions 1–11 (MKRSEKPEGYR) are enriched in basic and acidic residues. The segment at 1-71 (MKRSEKPEGY…PRQVRNPPKF (71 aa)) is disordered. Polar residues predominate over residues 19–30 (PASNYTVSSRQM). Over residues 46–64 (DAAKAEHNMSKMSTEDPRQ) the composition is skewed to basic and acidic residues. The region spanning 100–141 (EVNPQMLQDLQAAGFDEDMVIQALQKTNNRSIEAAIEFISKM) is the UBA domain. The disordered stretch occupies residues 149-276 (EQMAAAAARP…SWEPNSQTKR (128 aa)). A compositionally biased stretch (polar residues) spans 167-179 (NVQQSVNRKQSWK). The span at 235-268 (NPPPPPQVRSVTPPPPPRGQTPPPRGTTPPPPSW) shows a compositional bias: pro residues. Threonine 246 is subject to Phosphothreonine. Serine 278 is modified (phosphoserine). Disordered regions lie at residues 294–321 (GAWQEGYPPPPLNTSPMNPPNQGQRGIS), 365–405 (AGTV…NGSI), 432–484 (NWPQ…PSAT), and 515–631 (THPS…ESRI). Residues 300–312 (YPPPPLNTSPMNP) show a composition bias toward pro residues. The PPxY motif 1 motif lies at 373-376 (PPPY). The span at 381 to 405 (ANGQSPSALQTGGSAAPSSYTNGSI) shows a compositional bias: polar residues. Residues 434-447 (PQSSSAPAQSSPSS) are compositionally biased toward low complexity. The span at 454–482 (WQPNIPVRSNSFNNPLGNRASHSANSQPS) shows a compositional bias: polar residues. Residue serine 464 is modified to Phosphoserine; by NUAK1 and NUAK2. Residues 526–655 (TVQPSPFPEG…HVENVLKSHQ (130 aa)) are interaction with YAP1. The short motif at 556–559 (PPPY) is the PPxY motif 2 element. Basic and acidic residues predominate over residues 579 to 609 (PSKEDQPSLPKEDESEKSYENVDSGDKEKKQ). Serine 613 is modified (phosphoserine). The segment covering 621–630 (KKDEERRESR) has biased composition (basic and acidic residues). Serine 674 is subject to Phosphoserine. The Protein kinase domain maps to 705–1010 (FVKIKTLGIG…ADEIKAHPFF (306 aa)). Residues 711–719 (LGIGAFGEV) and lysine 734 contribute to the ATP site. Catalysis depends on aspartate 828, which acts as the Proton acceptor. Phosphoserine; by STK3/MST2 is present on serine 909. Positions 1011-1090 (KTIDFSSDLR…RRFFDDNGYP (80 aa)) constitute an AGC-kinase C-terminal domain. The residue at position 1079 (threonine 1079) is a Phosphothreonine; by STK3/MST2. The interval 1104–1130 (SQGSEQQSDEDDQNTGSEIKNRDLVYV) is disordered.

Belongs to the protein kinase superfamily. AGC Ser/Thr protein kinase family. Complexes with CDK1 in early mitosis. LATS1-associated CDK1 has no mitotic cyclin partner and no apparent kinase activity. Binds phosphorylated ZYX, locating this protein to the mitotic spindle and suggesting a role for actin regulatory proteins during mitosis. Binds to and colocalizes with LIMK1 at the actomyosin contractile ring during cytokinesis. Interacts (via PPxY motif 2) with YAP1 (via WW domains). Interacts with MOB1A and MOB1B. Interacts with LIMD1, WTIP and AJUBA. Interacts with ESR1, DCAF1 and DCAF13; probably recruits DCAF1 and DCAF13 to ESR1 to promote ESR1 ubiquitination and ubiquitin-mediated proteasomal degradation. Interacts with STK3/MST2; this interaction is inhibited in the presence of DLG5. Interacts with SCRIB in the presence of DLG5. Interacts with WWTR1/TAZ. Interacts with WWC1, WWC2 and WWC3 (via their WW domains). Mg(2+) serves as cofactor. Post-translationally, autophosphorylated and phosphorylated during M-phase of the cell cycle. Phosphorylated by STK3/MST2 at Ser-909 and Thr-1079, which results in its activation. Phosphorylated by MAP4Ks; in parallel to STK3/MST2 and resulting to its activation. Phosphorylation at Ser-464 by NUAK1 and NUAK2 leads to decreased protein level and is required to regulate cellular senescence and cellular ploidy. Expressed in all adult tissues examined except for lung and kidney.

It localises to the cytoplasm. The protein resides in the cytoskeleton. The protein localises to the microtubule organizing center. It is found in the centrosome. Its subcellular location is the spindle. It localises to the midbody. The protein resides in the spindle pole body. It carries out the reaction L-seryl-[protein] + ATP = O-phospho-L-seryl-[protein] + ADP + H(+). It catalyses the reaction L-threonyl-[protein] + ATP = O-phospho-L-threonyl-[protein] + ADP + H(+). Negative regulator of YAP1 in the Hippo signaling pathway that plays a pivotal role in organ size control and tumor suppression by restricting proliferation and promoting apoptosis. The core of this pathway is composed of a kinase cascade wherein STK3/MST2 and STK4/MST1, in complex with its regulatory protein SAV1, phosphorylates and activates LATS1/2 in complex with its regulatory protein MOB1, which in turn phosphorylates and inactivates YAP1 oncoprotein and WWTR1/TAZ. Phosphorylation of YAP1 by LATS1 inhibits its translocation into the nucleus to regulate cellular genes important for cell proliferation, cell death, and cell migration. Acts as a tumor suppressor which plays a critical role in maintenance of ploidy through its actions in both mitotic progression and the G1 tetraploidy checkpoint. Negatively regulates G2/M transition by down-regulating CDK1 kinase activity. Involved in the control of p53 expression. Affects cytokinesis by regulating actin polymerization through negative modulation of LIMK1. May also play a role in endocrine function. Plays a role in mammary gland epithelial cell differentiation, both through the Hippo signaling pathway and the intracellular estrogen receptor signaling pathway by promoting the degradation of ESR1. Acts as an activator of the NLRP3 inflammasome by mediating phosphorylation of 'Ser-265' of NLRP3 following NLRP3 palmitoylation, promoting NLRP3 activation by NEK7. This Homo sapiens (Human) protein is Serine/threonine-protein kinase LATS1.